Here is a 232-residue protein sequence, read N- to C-terminus: MDDNKPKSNTFTDEGRLPQVEFAIKNVSRAGTIIGYVCSDGVVLMGVNKEPTNGPMEKIYQLSDSIYCVLCGLFGDAMELKRYARIKAQEVLERFGVECPLTTLCKFVGQRKQAFTQYAGTRPFGVSFLYAGVIDGKYALMSTDPSGTSNRWKGMCYGENEEAINRGLKNDFPEDEMDMKTATVEILRLLGKARELGPKEADRLEILHFSKDCKKYLPCDEVLKLLEEIHAK.

The protein belongs to the peptidase T1A family. The 26S proteasome consists of a 20S proteasome core and two 19S regulatory subunits. The 20S proteasome core is composed of 28 subunits that are arranged in four stacked rings, resulting in a barrel-shaped structure. The two end rings are each formed by seven alpha subunits, and the two central rings are each formed by seven beta subunits. The catalytic chamber with the active sites is on the inside of the barrel.

Its subcellular location is the cytoplasm. The protein resides in the nucleus. In terms of biological role, the proteasome degrades poly-ubiquitinated proteins in the cytoplasm and in the nucleus. It is essential for the regulated turnover of proteins and for the removal of misfolded proteins. The proteasome is a multicatalytic proteinase complex that is characterized by its ability to cleave peptides with Arg, Phe, Tyr, Leu, and Glu adjacent to the leaving group at neutral or slightly basic pH. It has an ATP-dependent proteolytic activity. The chain is Probable proteasome subunit alpha type-3 (PRE9) from Encephalitozoon cuniculi (strain GB-M1) (Microsporidian parasite).